A 198-amino-acid chain; its full sequence is RNA pyrophosphohydrolase (198 aa).

The Nudix hydrolase domain maps to 6–149; it reads GYRPNVGIVI…KKEVYRKAMK (144 aa). Positions 38 to 59 match the Nudix box motif; it reads GGINDNESAEQAMYRELFEEVG.

It belongs to the Nudix hydrolase family. RppH subfamily. A divalent metal cation is required as a cofactor.

Functionally, accelerates the degradation of transcripts by removing pyrophosphate from the 5'-end of triphosphorylated RNA, leading to a more labile monophosphorylated state that can stimulate subsequent ribonuclease cleavage. This Pasteurella multocida (strain Pm70) protein is RNA pyrophosphohydrolase.